Here is an 89-residue protein sequence, read N- to C-terminus: Teretoxin Tan22.12 (89 aa).

An N-terminal signal peptide occupies residues 1–22 (MKVLFTLAMIVVTLCLGQRMRR).

This sequence belongs to the teretoxin C (TC) superfamily. Post-translationally, contains 4 disulfide bonds. In terms of tissue distribution, expressed by the venom duct.

The protein localises to the secreted. This chain is Teretoxin Tan22.12, found in Terebra anilis (Auger snail).